Reading from the N-terminus, the 385-residue chain is Carbohydrate diacid regulator (385 aa).

Belongs to the CdaR family.

Its function is as follows. Seems to regulate the expression of the operons for the enzymes involved in D-galactarate, D-glucarate and D-glycerate utilization. This chain is Carbohydrate diacid regulator (cdaR), found in Escherichia coli (strain K12).